The primary structure comprises 209 residues: Uracil phosphoribosyltransferase (209 aa).

Residues R79, R104, and 131–139 (DPMLATGGS) contribute to the 5-phospho-alpha-D-ribose 1-diphosphate site. Uracil-binding positions include I194 and 199–201 (GDA). D200 contacts 5-phospho-alpha-D-ribose 1-diphosphate.

Belongs to the UPRTase family. Mg(2+) serves as cofactor.

The catalysed reaction is UMP + diphosphate = 5-phospho-alpha-D-ribose 1-diphosphate + uracil. It functions in the pathway pyrimidine metabolism; UMP biosynthesis via salvage pathway; UMP from uracil: step 1/1. With respect to regulation, allosterically activated by GTP. Catalyzes the conversion of uracil and 5-phospho-alpha-D-ribose 1-diphosphate (PRPP) to UMP and diphosphate. The sequence is that of Uracil phosphoribosyltransferase from Clostridium novyi (strain NT).